The primary structure comprises 210 residues: 7-methyl-GTP pyrophosphatase (210 aa).

The active-site Proton acceptor is the D79.

It belongs to the Maf family. YceF subfamily. It depends on a divalent metal cation as a cofactor.

Its subcellular location is the cytoplasm. It catalyses the reaction N(7)-methyl-GTP + H2O = N(7)-methyl-GMP + diphosphate + H(+). In terms of biological role, nucleoside triphosphate pyrophosphatase that hydrolyzes 7-methyl-GTP (m(7)GTP). May have a dual role in cell division arrest and in preventing the incorporation of modified nucleotides into cellular nucleic acids. The polypeptide is 7-methyl-GTP pyrophosphatase (Burkholderia orbicola (strain AU 1054)).